The primary structure comprises 60 residues: Mastoparan-VT5 (60 aa).

An N-terminal signal peptide occupies residues 1–27 (MKNTILILFTAFIALLGFFGMIAEPLA). AXPX repeat units lie at residues 27–30 (ADPL), 31–34 (ADPL), 37–40 (ADPD), and 41–44 (ADPE). Residues 28–45 (DPLADPLPDADPDADPET) constitute a propeptide that is removed on maturation.

Belongs to the MCD family. Mastoparan subfamily. As to expression, expressed by the venom gland.

It localises to the secreted. Functionally, the synthetic peptide shows weak antimicrobial activities against a few Gram-positive bacteria (only 2 on the 11 strains tested) and the fungus C.albicans. Does not show activity against all the Gram-negative bacteria tested. Exhibits little hemolytic activity against washed human erythrocytes. This is Mastoparan-VT5 from Vespa tropica (Greater banded hornet).